Consider the following 599-residue polypeptide: Elongation factor 4 (599 aa).

Residues 2–185 (KYIRNFSIIA…RIIIDIPVPQ (184 aa)) enclose the tr-type G domain. GTP contacts are provided by residues 14–19 (NHGKST) and 132–135 (NKID).

Belongs to the TRAFAC class translation factor GTPase superfamily. Classic translation factor GTPase family. LepA subfamily.

It localises to the cell inner membrane. It catalyses the reaction GTP + H2O = GDP + phosphate + H(+). Its function is as follows. Required for accurate and efficient protein synthesis under certain stress conditions. May act as a fidelity factor of the translation reaction, by catalyzing a one-codon backward translocation of tRNAs on improperly translocated ribosomes. Back-translocation proceeds from a post-translocation (POST) complex to a pre-translocation (PRE) complex, thus giving elongation factor G a second chance to translocate the tRNAs correctly. Binds to ribosomes in a GTP-dependent manner. The protein is Elongation factor 4 of Blochmanniella floridana.